We begin with the raw amino-acid sequence, 243 residues long: Protein DMP8 (243 aa).

Residues 1-37 (MEKTEESVGIRVYTTTTTQNPSPTSSRSPKPVPLSSL) form a disordered region. Positions 14 to 29 (TTTTTQNPSPTSSRSP) are enriched in low complexity. 4 consecutive transmembrane segments (helical) span residues 70–90 (MLVN…LPTI), 98–118 (GINT…CFFF), 174–194 (VNDF…AFSD), and 212–232 (VMES…LVFP).

It belongs to the plant DMP1 protein family. As to expression, restricted to flowers.

Its subcellular location is the endoplasmic reticulum membrane. It is found in the vacuole membrane. Functionally, involved in membrane remodeling. This chain is Protein DMP8, found in Arabidopsis thaliana (Mouse-ear cress).